The primary structure comprises 470 residues: ATP synthase subunit beta (470 aa).

157–164 is a binding site for ATP; the sequence is GGAGVGKT.

The protein belongs to the ATPase alpha/beta chains family. As to quaternary structure, F-type ATPases have 2 components, CF(1) - the catalytic core - and CF(0) - the membrane proton channel. CF(1) has five subunits: alpha(3), beta(3), gamma(1), delta(1), epsilon(1). CF(0) has three main subunits: a(1), b(2) and c(9-12). The alpha and beta chains form an alternating ring which encloses part of the gamma chain. CF(1) is attached to CF(0) by a central stalk formed by the gamma and epsilon chains, while a peripheral stalk is formed by the delta and b chains.

The protein localises to the cell inner membrane. It carries out the reaction ATP + H2O + 4 H(+)(in) = ADP + phosphate + 5 H(+)(out). Produces ATP from ADP in the presence of a proton gradient across the membrane. The catalytic sites are hosted primarily by the beta subunits. In Geobacter sulfurreducens (strain ATCC 51573 / DSM 12127 / PCA), this protein is ATP synthase subunit beta.